We begin with the raw amino-acid sequence, 548 residues long: Chaperonin GroEL (548 aa).

Residues 30 to 33, lysine 51, 87 to 91, glycine 415, 479 to 481, and aspartate 495 contribute to the ATP site; these read TLGP, DGTTT, and NAA.

It belongs to the chaperonin (HSP60) family. In terms of assembly, forms a cylinder of 14 subunits composed of two heptameric rings stacked back-to-back. Interacts with the co-chaperonin GroES.

Its subcellular location is the cytoplasm. It catalyses the reaction ATP + H2O + a folded polypeptide = ADP + phosphate + an unfolded polypeptide.. Its function is as follows. Together with its co-chaperonin GroES, plays an essential role in assisting protein folding. The GroEL-GroES system forms a nano-cage that allows encapsulation of the non-native substrate proteins and provides a physical environment optimized to promote and accelerate protein folding. The chain is Chaperonin GroEL from Proteus mirabilis (strain HI4320).